The following is a 151-amino-acid chain: Protein SprT-like (151 aa).

The SprT-like domain occupies 6 to 147; sequence LQRMVENLSE…GHCNGKLRMK (142 aa). H67 lines the Zn(2+) pocket. E68 is an active-site residue. Residue H71 coordinates Zn(2+).

The protein belongs to the SprT family. It depends on Zn(2+) as a cofactor.

It localises to the cytoplasm. This is Protein SprT-like from Staphylococcus aureus (strain MRSA252).